A 943-amino-acid chain; its full sequence is UvrABC system protein A (943 aa).

31–38 (GLSGSGKS) contributes to the ATP binding site. The C4-type zinc finger occupies 253–280 (CPHCGYSVPELEPRLFSFNNPAGACPTC). ABC transporter domains lie at 310–587 (WDRR…PHSI) and 607–937 (LDKK…RFLK). 640–647 (GVSGSGKS) contacts ATP. Residues 740–766 (CEACQGDGVIKVEMHFLPDVYVPCEQC) form a C4-type zinc finger.

The protein belongs to the ABC transporter superfamily. UvrA family. In terms of assembly, forms a heterotetramer with UvrB during the search for lesions.

The protein localises to the cytoplasm. Its function is as follows. The UvrABC repair system catalyzes the recognition and processing of DNA lesions. UvrA is an ATPase and a DNA-binding protein. A damage recognition complex composed of 2 UvrA and 2 UvrB subunits scans DNA for abnormalities. When the presence of a lesion has been verified by UvrB, the UvrA molecules dissociate. The sequence is that of UvrABC system protein A from Pasteurella multocida (strain Pm70).